The sequence spans 63 residues: Large ribosomal subunit protein uL29 (63 aa).

This sequence belongs to the universal ribosomal protein uL29 family.

In Sodalis glossinidius (strain morsitans), this protein is Large ribosomal subunit protein uL29.